Consider the following 251-residue polypeptide: uncharacterized protein (251 aa).

Residues 229–251 (TSTETSPEHQADLKDDNSDISST) form a disordered region. Residues 234–245 (SPEHQADLKDDN) are compositionally biased toward basic and acidic residues.

This is an uncharacterized protein from Acanthamoeba polyphaga (Amoeba).